The following is a 1525-amino-acid chain: Autophagy-related protein 2 (1525 aa).

Disordered stretches follow at residues 216–247 and 712–738; these read RGTS…TDPF and AELQ…PKRI. Residues 220-230 are compositionally biased toward polar residues; that stretch reads APVTAGSTAHA. Residues 716-733 are compositionally biased toward low complexity; sequence ESSSPDSSSRESSSGSES.

This sequence belongs to the ATG2 family.

Its subcellular location is the preautophagosomal structure membrane. The protein resides in the endoplasmic reticulum membrane. The catalysed reaction is a 1,2-diacyl-sn-glycero-3-phosphocholine(in) = a 1,2-diacyl-sn-glycero-3-phosphocholine(out). It catalyses the reaction a 1,2-diacyl-sn-glycero-3-phospho-L-serine(in) = a 1,2-diacyl-sn-glycero-3-phospho-L-serine(out). The enzyme catalyses a 1,2-diacyl-sn-glycero-3-phosphoethanolamine(in) = a 1,2-diacyl-sn-glycero-3-phosphoethanolamine(out). In terms of biological role, lipid transfer protein required for autophagosome completion and peroxisome degradation. Tethers the edge of the isolation membrane (IM) to the endoplasmic reticulum (ER) and mediates direct lipid transfer from ER to IM for IM expansion. ATG2 binds to the ER exit site (ERES), which is the membrane source for autophagosome formation, using basic residues in its N-terminal region (NR) and to the expanding edge of the IM through its C-terminal region. The latter binding is assisted by an ATG18-PtdIns3P interaction. ATG2 then extracts phospholipids from the membrane source using its NR and transfers them to ATG9 to the IM through its predicted beta-sheet-rich structure for membrane expansion. This chain is Autophagy-related protein 2 (ATG2), found in Yarrowia lipolytica (strain CLIB 122 / E 150) (Yeast).